Consider the following 162-residue polypeptide: Large ribosomal subunit protein uL10 (162 aa).

Belongs to the universal ribosomal protein uL10 family. Part of the ribosomal stalk of the 50S ribosomal subunit. The N-terminus interacts with L11 and the large rRNA to form the base of the stalk. The C-terminus forms an elongated spine to which L12 dimers bind in a sequential fashion forming a multimeric L10(L12)X complex.

In terms of biological role, forms part of the ribosomal stalk, playing a central role in the interaction of the ribosome with GTP-bound translation factors. In Vibrio vulnificus (strain CMCP6), this protein is Large ribosomal subunit protein uL10.